Reading from the N-terminus, the 388-residue chain is Formate-dependent phosphoribosylglycinamide formyltransferase (388 aa).

Residues 15-16 (EL) and E75 each bind N(1)-(5-phospho-beta-D-ribosyl)glycinamide. ATP-binding positions include R107, K148, 153-158 (SSGKGQ), 188-191 (EEFL), and E196. The 191-residue stretch at 112–302 (DLASAELALL…EFELHLRAVL (191 aa)) folds into the ATP-grasp domain. Mg(2+) is bound by residues E261 and E273. Residues D280, K350, and 357 to 358 (RR) contribute to the N(1)-(5-phospho-beta-D-ribosyl)glycinamide site.

This sequence belongs to the PurK/PurT family. As to quaternary structure, homodimer.

It carries out the reaction N(1)-(5-phospho-beta-D-ribosyl)glycinamide + formate + ATP = N(2)-formyl-N(1)-(5-phospho-beta-D-ribosyl)glycinamide + ADP + phosphate + H(+). It participates in purine metabolism; IMP biosynthesis via de novo pathway; N(2)-formyl-N(1)-(5-phospho-D-ribosyl)glycinamide from N(1)-(5-phospho-D-ribosyl)glycinamide (formate route): step 1/1. In terms of biological role, involved in the de novo purine biosynthesis. Catalyzes the transfer of formate to 5-phospho-ribosyl-glycinamide (GAR), producing 5-phospho-ribosyl-N-formylglycinamide (FGAR). Formate is provided by PurU via hydrolysis of 10-formyl-tetrahydrofolate. In Prochlorococcus marinus (strain MIT 9313), this protein is Formate-dependent phosphoribosylglycinamide formyltransferase.